The chain runs to 314 residues: Vomeronasal type-1 receptor 98 (314 aa).

At 1–19 (MNKDTTMYCSAYIRDVFFC) the chain is on the extracellular side. Residues 20–40 (EIGVGISANSCLLLFHIFMFI) form a helical membrane-spanning segment. Topologically, residues 41 to 49 (RGHRPRLTD) are cytoplasmic. Residues 50–70 (LPIGLMALIHLLMLLLAAYIA) form a helical membrane-spanning segment. At 71–92 (KDFFMSSGWDDITCKLFIFLHR) the chain is on the extracellular side. A disulfide bridge links cysteine 84 with cysteine 171. A helical membrane pass occupies residues 93–113 (FFRSLSVCATCMLSVFQTIIL). The Cytoplasmic portion of the chain corresponds to 114 to 133 (CPQSSHLAKFKPNSPYHLSC). Residues 134–154 (FFIFMSIFYTSISSHILIAAI) traverse the membrane as a helical segment. At 155 to 186 (ATQNLTSVNLIYITKSCSFLPMSSSMQRTFST) the chain is on the extracellular side. Asparagine 158 carries an N-linked (GlcNAc...) asparagine glycan. A helical membrane pass occupies residues 187–207 (LLAFRNAFLIGLMGLSTCYMA). Topologically, residues 208–235 (TLLCRHKTRSQRLQNSKLSPKATPEQRA) are cytoplasmic. The chain crosses the membrane as a helical span at residues 236–256 (IWTLLMFMSFFLVMSTFDSII). The Extracellular portion of the chain corresponds to 257–268 (SYSRTIFQGNPS). Residues 269–289 (LYCAQILVAHSYAVVSPMLVL) traverse the membrane as a helical segment. The Cytoplasmic segment spans residues 290–314 (SNENRLTNPLISMYERIVRLDFLCW).

Belongs to the G-protein coupled receptor 1 family.

The protein resides in the cell membrane. In terms of biological role, putative pheromone receptor implicated in the regulation of social as well as reproductive behavior. In Rattus norvegicus (Rat), this protein is Vomeronasal type-1 receptor 98 (Vom1r98).